A 353-amino-acid polypeptide reads, in one-letter code: Quinolinate synthase (353 aa).

H47 and S68 together coordinate iminosuccinate. C113 lines the [4Fe-4S] cluster pocket. Residues 139 to 141 and S156 each bind iminosuccinate; that span reads YAN. C200 is a [4Fe-4S] cluster binding site. Residues 226–228 and T243 each bind iminosuccinate; that span reads HPE. C297 is a [4Fe-4S] cluster binding site.

The protein belongs to the quinolinate synthase family. Type 1 subfamily. The cofactor is [4Fe-4S] cluster.

It is found in the cytoplasm. The enzyme catalyses iminosuccinate + dihydroxyacetone phosphate = quinolinate + phosphate + 2 H2O + H(+). Its pathway is cofactor biosynthesis; NAD(+) biosynthesis; quinolinate from iminoaspartate: step 1/1. Catalyzes the condensation of iminoaspartate with dihydroxyacetone phosphate to form quinolinate. In Serratia proteamaculans (strain 568), this protein is Quinolinate synthase.